A 206-amino-acid polypeptide reads, in one-letter code: dCTP deaminase, dUMP-forming (206 aa).

Residues 117–122 (RSSFGR), aspartate 135, 143–145 (TLE), glutamine 163, tyrosine 177, lysine 184, and glutamine 188 contribute to the dCTP site. Glutamate 145 functions as the Proton donor/acceptor in the catalytic mechanism.

This sequence belongs to the dCTP deaminase family. As to quaternary structure, homotrimer.

The enzyme catalyses dCTP + 2 H2O = dUMP + NH4(+) + diphosphate. It participates in pyrimidine metabolism; dUMP biosynthesis; dUMP from dCTP: step 1/1. Functionally, bifunctional enzyme that catalyzes both the deamination of dCTP to dUTP and the hydrolysis of dUTP to dUMP without releasing the toxic dUTP intermediate. The chain is dCTP deaminase, dUMP-forming from Methanococcus maripaludis (strain DSM 14266 / JCM 13030 / NBRC 101832 / S2 / LL).